The following is a 458-amino-acid chain: UPF0210 protein Maeo_1412 (458 aa).

It belongs to the UPF0210 family.

This is UPF0210 protein Maeo_1412 from Methanococcus aeolicus (strain ATCC BAA-1280 / DSM 17508 / OCM 812 / Nankai-3).